Consider the following 273-residue polypeptide: Thiazole synthase (273 aa).

Catalysis depends on Lys-110, which acts as the Schiff-base intermediate with DXP. 1-deoxy-D-xylulose 5-phosphate-binding positions include Gly-171, 197 to 198 (AG), and 219 to 220 (NT). Residues 251 to 273 (MAAQDSAQPSTPVLGTPFWHHAP) are disordered.

Belongs to the ThiG family. As to quaternary structure, homotetramer. Forms heterodimers with either ThiH or ThiS.

It is found in the cytoplasm. It carries out the reaction [ThiS sulfur-carrier protein]-C-terminal-Gly-aminoethanethioate + 2-iminoacetate + 1-deoxy-D-xylulose 5-phosphate = [ThiS sulfur-carrier protein]-C-terminal Gly-Gly + 2-[(2R,5Z)-2-carboxy-4-methylthiazol-5(2H)-ylidene]ethyl phosphate + 2 H2O + H(+). Its pathway is cofactor biosynthesis; thiamine diphosphate biosynthesis. In terms of biological role, catalyzes the rearrangement of 1-deoxy-D-xylulose 5-phosphate (DXP) to produce the thiazole phosphate moiety of thiamine. Sulfur is provided by the thiocarboxylate moiety of the carrier protein ThiS. In vitro, sulfur can be provided by H(2)S. The chain is Thiazole synthase from Variovorax paradoxus (strain S110).